Here is a 692-residue protein sequence, read N- to C-terminus: Serine/threonine-protein phosphatase PP-Z1 (692 aa).

Disordered regions lie at residues 1 to 309 and 321 to 357; these read MGNS…DIEN and ENVN…PKKF. A lipid anchor (N-myristoyl glycine) is attached at glycine 2. 3 stretches are compositionally biased toward low complexity: residues 32–41, 49–69, and 91–122; these read SHSVKSAKSN, SLPS…STPS, and SSSH…RRSS. At serine 49 the chain carries Phosphoserine. The span at 170 to 179 shows a compositional bias: acidic residues; it reads LTDDDNDDKD. Threonine 171 is modified (phosphothreonine). Residues 190–204 show a composition bias toward low complexity; sequence RSSNSRPSSIRSGSV. The span at 207–216 shows a compositional bias: basic and acidic residues; the sequence is RKSDVTHEEP. Residues serine 209 and serine 222 each carry the phosphoserine modification. 2 stretches are compositionally biased toward polar residues: residues 217-229 and 251-267; these read NNGS…QENY and FGSD…NSPG. Threonine 261 carries the post-translational modification Phosphothreonine. Position 265 is a phosphoserine (serine 265). A compositionally biased stretch (low complexity) spans 280 to 289; the sequence is TSNSTSSLNH. The span at 291 to 303 shows a compositional bias: basic and acidic residues; that stretch reads SSRDIYPSKHISN. Residues 321–331 are compositionally biased toward polar residues; sequence ENVNDKNNNIT. Mn(2+)-binding residues include aspartate 419, histidine 421, aspartate 447, and asparagine 479. Histidine 480 (proton donor) is an active-site residue. The Mn(2+) site is built by histidine 528 and histidine 603. Residues 672–692 form a disordered region; that stretch reads LANQQQQMMETSITNDNESQQ. Polar residues predominate over residues 673–692; that stretch reads ANQQQQMMETSITNDNESQQ. Serine 690 is subject to Phosphoserine.

This sequence belongs to the PPP phosphatase family. PP-Z subfamily. In terms of assembly, interacts with SIS2 and VHS3, which regulate its activity. It depends on Mn(2+) as a cofactor.

It catalyses the reaction O-phospho-L-seryl-[protein] + H2O = L-seryl-[protein] + phosphate. The enzyme catalyses O-phospho-L-threonyl-[protein] + H2O = L-threonyl-[protein] + phosphate. Inhibited by the regulatory subunits VHS3 and SIS2. Essential for the maintenance of cell size and integrity in response to osmotic stress. The chain is Serine/threonine-protein phosphatase PP-Z1 (PPZ1) from Saccharomyces cerevisiae (strain ATCC 204508 / S288c) (Baker's yeast).